The sequence spans 344 residues: [LysW]-L-2-aminoadipate 6-phosphate reductase (344 aa).

NADP(+)-binding positions include 12–15 (SGYA), 36–38 (SRR), and leucine 75. The active site involves cysteine 148. Residues serine 180, alanine 184, and asparagine 312 each contribute to the NADP(+) site.

It belongs to the NAGSA dehydrogenase family. Type 1 subfamily. LysY sub-subfamily. Homotetramer. Interacts with LysW. May form a ternary complex with LysW and LysZ.

The protein resides in the cytoplasm. It carries out the reaction [amino-group carrier protein]-C-terminal-N-(1-carboxy-5-oxopentan-1-yl)-L-glutamine + phosphate + NADP(+) = [amino-group carrier protein]-C-terminal-N-(1-carboxy-5-phosphooxy-5-oxopentan-1-yl)-L-glutamine + NADPH + H(+). Its pathway is amino-acid biosynthesis; L-lysine biosynthesis via AAA pathway; L-lysine from L-alpha-aminoadipate (Thermus route): step 3/5. Functionally, catalyzes the NADPH-dependent reduction of [LysW]-aminoadipate 6-phosphate to yield [LysW]-aminoadipate 6-semialdehyde. In Thermus thermophilus (strain ATCC BAA-163 / DSM 7039 / HB27), this protein is [LysW]-L-2-aminoadipate 6-phosphate reductase.